The sequence spans 477 residues: Exodeoxyribonuclease 7 large subunit (477 aa).

The segment at 452 to 477 is disordered; sequence KAAAAPKRVKKSPPPGTSGAQEDLFG.

It belongs to the XseA family. Heterooligomer composed of large and small subunits.

The protein localises to the cytoplasm. It carries out the reaction Exonucleolytic cleavage in either 5'- to 3'- or 3'- to 5'-direction to yield nucleoside 5'-phosphates.. In terms of biological role, bidirectionally degrades single-stranded DNA into large acid-insoluble oligonucleotides, which are then degraded further into small acid-soluble oligonucleotides. This chain is Exodeoxyribonuclease 7 large subunit, found in Erythrobacter litoralis (strain HTCC2594).